Consider the following 586-residue polypeptide: 2-succinyl-5-enolpyruvyl-6-hydroxy-3-cyclohexene-1-carboxylate synthase (586 aa).

The protein belongs to the TPP enzyme family. MenD subfamily. In terms of assembly, homodimer. It depends on Mg(2+) as a cofactor. The cofactor is Mn(2+). Requires thiamine diphosphate as cofactor.

The catalysed reaction is isochorismate + 2-oxoglutarate + H(+) = 5-enolpyruvoyl-6-hydroxy-2-succinyl-cyclohex-3-ene-1-carboxylate + CO2. Its pathway is quinol/quinone metabolism; 1,4-dihydroxy-2-naphthoate biosynthesis; 1,4-dihydroxy-2-naphthoate from chorismate: step 2/7. The protein operates within quinol/quinone metabolism; menaquinone biosynthesis. Catalyzes the thiamine diphosphate-dependent decarboxylation of 2-oxoglutarate and the subsequent addition of the resulting succinic semialdehyde-thiamine pyrophosphate anion to isochorismate to yield 2-succinyl-5-enolpyruvyl-6-hydroxy-3-cyclohexene-1-carboxylate (SEPHCHC). The protein is 2-succinyl-5-enolpyruvyl-6-hydroxy-3-cyclohexene-1-carboxylate synthase of Natronomonas pharaonis (strain ATCC 35678 / DSM 2160 / CIP 103997 / JCM 8858 / NBRC 14720 / NCIMB 2260 / Gabara) (Halobacterium pharaonis).